Consider the following 78-residue polypeptide: Acyl carrier protein (78 aa).

The region spanning 2–77 (SDIAERVKKI…DAVKFIEKAQ (76 aa)) is the Carrier domain. Position 37 is an O-(pantetheine 4'-phosphoryl)serine (S37).

It belongs to the acyl carrier protein (ACP) family. 4'-phosphopantetheine is transferred from CoA to a specific serine of apo-ACP by AcpS. This modification is essential for activity because fatty acids are bound in thioester linkage to the sulfhydryl of the prosthetic group.

It is found in the cytoplasm. It participates in lipid metabolism; fatty acid biosynthesis. In terms of biological role, carrier of the growing fatty acid chain in fatty acid biosynthesis. This is Acyl carrier protein from Sinorhizobium fredii (strain NBRC 101917 / NGR234).